Here is a 314-residue protein sequence, read N- to C-terminus: Mitochondrial MRF1 N(5)-glutamine methyltransferase MTQ1 (314 aa).

S-adenosyl-L-methionine contacts are provided by residues 118–122, Asp141, and Asn188; that span reads FTGTG. 188 to 191 is a binding site for substrate; it reads NPPY.

This sequence belongs to the protein N5-glutamine methyltransferase family.

It is found in the mitochondrion. It catalyses the reaction L-glutaminyl-[peptide chain release factor] + S-adenosyl-L-methionine = N(5)-methyl-L-glutaminyl-[peptide chain release factor] + S-adenosyl-L-homocysteine + H(+). Methylates MRF1 on 'Gln-287' using S-adenosyl L-methionine as methyl donor. The sequence is that of Mitochondrial MRF1 N(5)-glutamine methyltransferase MTQ1 (MTQ1) from Saccharomyces cerevisiae (strain ATCC 204508 / S288c) (Baker's yeast).